A 166-amino-acid polypeptide reads, in one-letter code: MTEALPFWKTKHLTELTREEWESLCDGCGRCCLHKLRDEETEELAFTNVSCRLLDTQSCRCTSYATRFRKVPDCISLTPALVAEIDWLPPSCAYRIVLNGKDLPWWHPLVSGDPETVHQAGISVRGRAIDEREAGPLEDYIVSWPGRFPRPRRPRQEPAGKTADES.

The disordered stretch occupies residues 147-166 (RFPRPRRPRQEPAGKTADES). Positions 154–166 (PRQEPAGKTADES) are enriched in basic and acidic residues.

Belongs to the UPF0260 family.

The polypeptide is UPF0260 protein GbCGDNIH1_2046 (Granulibacter bethesdensis (strain ATCC BAA-1260 / CGDNIH1)).